The chain runs to 209 residues: uncharacterized protein (209 aa).

The segment covering Met-1–Gly-15 has biased composition (basic and acidic residues). Positions Met-1 to Asp-34 are disordered. Positions Thr-22–Pro-31 are enriched in polar residues.

To E.coli YfdL and M.jannaschii MJ0347.

This is an uncharacterized protein from Escherichia coli (strain K12).